Reading from the N-terminus, the 169-residue chain is Small ribosomal subunit protein uS5c (169 aa).

The region spanning 17 to 80 (WQERVVQIRR…ADGKKHVVEV (64 aa)) is the S5 DRBM domain.

This sequence belongs to the universal ribosomal protein uS5 family. Part of the 30S ribosomal subunit. Contacts protein S4.

The protein resides in the plastid. It is found in the cyanelle. Its function is as follows. With S4 and S12 plays an important role in translational accuracy. This chain is Small ribosomal subunit protein uS5c (rps5), found in Cyanophora paradoxa.